A 179-amino-acid chain; its full sequence is Large ribosomal subunit protein uL6 (179 aa).

The protein belongs to the universal ribosomal protein uL6 family. In terms of assembly, part of the 50S ribosomal subunit.

Functionally, this protein binds to the 23S rRNA, and is important in its secondary structure. It is located near the subunit interface in the base of the L7/L12 stalk, and near the tRNA binding site of the peptidyltransferase center. The protein is Large ribosomal subunit protein uL6 of Buchnera aphidicola subsp. Baizongia pistaciae (strain Bp).